We begin with the raw amino-acid sequence, 262 residues long: Transmembrane protein 106A (262 aa).

Residues 95–115 (FVFLAVLICLVTSSFIVFFLF) traverse the membrane as a helical segment.

This sequence belongs to the TMEM106 family. Expressed in renal cells (at protein level). Expressed in epithelial cells.

It is found in the cell membrane. Functionally, activates macrophages and polarizes them into M1-like macrophages through the activation of the MAPK and NF-kappaB signaling pathway. Upon activation, up-regulates the expression of CD80, CD86, CD69 and MHC II on macrophages, and induces the release of pro-inflammatory cytokines such as TNF, IL1B, IL6, CCL2 and nitric oxide. May play a role in inhibition of proliferation and migration. The chain is Transmembrane protein 106A (TMEM106A) from Homo sapiens (Human).